The sequence spans 345 residues: Succinylglutamate desuccinylase (345 aa).

Zn(2+) is bound by residues His64, Glu67, and His161. The active site involves Glu225.

This sequence belongs to the AspA/AstE family. Succinylglutamate desuccinylase subfamily. It depends on Zn(2+) as a cofactor.

The catalysed reaction is N-succinyl-L-glutamate + H2O = L-glutamate + succinate. The protein operates within amino-acid degradation; L-arginine degradation via AST pathway; L-glutamate and succinate from L-arginine: step 5/5. Functionally, transforms N(2)-succinylglutamate into succinate and glutamate. This is Succinylglutamate desuccinylase from Shewanella pealeana (strain ATCC 700345 / ANG-SQ1).